Here is a 528-residue protein sequence, read N- to C-terminus: MLSKATLLLFLPSWARVTYAAFGITTTSSSYVIDANSPNPLKFTVNRSNCDITSINFYGAELQYQGTGSHIGSGLGSASVSATQSGDYIKVTCSTSTLTHYFVVHNGDPIIHMATYITAEPSIGELRFIARLNNELLPNEEPFGEVSNTSGGTAIEGSDVFLVNGQTRSKFYSSERFIDDHRHCVSGSAHRVCMILNQYESSSGGPFHRDINTNNGGQYNALYWYMNSGHVQTEANRMGLHGPYSMYFSRSGTPGTNIDTSFFANLDIQGYVPDSARGKVSGKASGADSTFKWVVHWYNDEAQYWTYTASDGSFTSPAMKPGTYTMVYYQGEYKVASTSVSVSAGSTTTKNISGSVTTGKTIFKIGEWDGQPTGFRNAANQLRMHPSDSRMSSWGPLTYTVGSSSLSDFPMAIFKSVNSPVTIKFTASSSQTGAATLRIGTTLSFAGGRPQVTVNSWTGPIPSAPKDLNSRGVTRGAYRGLGEVYDVAIPAGTIVAGTNTITISVVSGSSGDAFLSPNFIFDCVELFQ.

An N-terminal signal peptide occupies residues 1-20 (MLSKATLLLFLPSWARVTYA). Asparagine 46 carries an N-linked (GlcNAc...) asparagine glycan. Cysteine 50 and cysteine 93 are disulfide-bonded. Residue asparagine 148 is glycosylated (N-linked (GlcNAc...) asparagine). Cysteine 184 and cysteine 193 are oxidised to a cystine. The N-linked (GlcNAc...) asparagine glycan is linked to asparagine 351.

Belongs to the polysaccharide lyase 4 family.

The protein resides in the secreted. It carries out the reaction Endotype eliminative cleavage of L-alpha-rhamnopyranosyl-(1-&gt;4)-alpha-D-galactopyranosyluronic acid bonds of rhamnogalacturonan I domains in ramified hairy regions of pectin leaving L-rhamnopyranose at the reducing end and 4-deoxy-4,5-unsaturated D-galactopyranosyluronic acid at the non-reducing end.. Its function is as follows. Pectinolytic enzymes consist of four classes of enzymes: pectin lyase, polygalacturonase, pectin methylesterase and rhamnogalacturonase. Degrades the rhamnogalacturonan I (RG-I) backbone of pectin. The sequence is that of Probable rhamnogalacturonate lyase A (rglA) from Aspergillus fumigatus (strain CBS 144.89 / FGSC A1163 / CEA10) (Neosartorya fumigata).